We begin with the raw amino-acid sequence, 387 residues long: MSTAFRWVEQARVGRARAGHLHTAHGVVPTPTFMPVGTVGTVKAMTMDSVRSTGAGIVLGNTYHLMLRPGAEKVRALGGLHRFMDWPGPILTDSGGFQVMSLGALRKLDQDGVTFNSHIDGSKHRLTPERSTDIQHALDATITMCFDECPALPAPPETIAQSMRLSMRWAARCREAFVPRAGYAQYGIIQGGTEPELRAESVRALTGIGFEGYAIGGLAVGEGQELMYATLDATVPLIPHDSPRYLMGVGTPDDLLGAVERGVDMFDCVMPTRAGRTARAYTERGTLNLRNARHADDTRPLSPHCDCLACTRHSRAYLHHLFRANEILGPMLLTWHNLAYYQRLMRGMRGAIVAGTLGAHAAGLRAEWAMEDWTPDEMPPPDLPPVP.

Asp93 (proton acceptor) is an active-site residue. Substrate-binding positions include 93–97 (DSGGF), Asp147, Gln190, and Gly217. Positions 248–254 (GVGTPDD) are RNA binding. Asp267 acts as the Nucleophile in catalysis. The segment at 272-276 (TRAGR) is RNA binding; important for wobble base 34 recognition. Residues Cys305, Cys307, Cys310, and His336 each contribute to the Zn(2+) site.

It belongs to the queuine tRNA-ribosyltransferase family. Homodimer. Within each dimer, one monomer is responsible for RNA recognition and catalysis, while the other monomer binds to the replacement base PreQ1. It depends on Zn(2+) as a cofactor.

The catalysed reaction is 7-aminomethyl-7-carbaguanine + guanosine(34) in tRNA = 7-aminomethyl-7-carbaguanosine(34) in tRNA + guanine. It participates in tRNA modification; tRNA-queuosine biosynthesis. In terms of biological role, catalyzes the base-exchange of a guanine (G) residue with the queuine precursor 7-aminomethyl-7-deazaguanine (PreQ1) at position 34 (anticodon wobble position) in tRNAs with GU(N) anticodons (tRNA-Asp, -Asn, -His and -Tyr). Catalysis occurs through a double-displacement mechanism. The nucleophile active site attacks the C1' of nucleotide 34 to detach the guanine base from the RNA, forming a covalent enzyme-RNA intermediate. The proton acceptor active site deprotonates the incoming PreQ1, allowing a nucleophilic attack on the C1' of the ribose to form the product. After dissociation, two additional enzymatic reactions on the tRNA convert PreQ1 to queuine (Q), resulting in the hypermodified nucleoside queuosine (7-(((4,5-cis-dihydroxy-2-cyclopenten-1-yl)amino)methyl)-7-deazaguanosine). This chain is Queuine tRNA-ribosyltransferase, found in Gluconacetobacter diazotrophicus (strain ATCC 49037 / DSM 5601 / CCUG 37298 / CIP 103539 / LMG 7603 / PAl5).